Here is a 450-residue protein sequence, read N- to C-terminus: MREVISIHIGQAGVQIGNACWELYCLEHGIQPDGQMPSDKSLGGCDDSFSTFFSETGSGRHVPRAVMIDLEPTVIDEIRTGTYRSLFHPEQLITGKEDAANNYARGHYTIGKEIIDLTLDRIRRLADNCTGLQGFLVFHSFGGGTGSGFTSLLMERLSVDYGKKAKLEFSVYPAPQVSTAVVEPYNSILTTHTTLEHSDCSFMVDNEAIYDICRRNLDIERPSYTNLNRLIGQIVSSITASLRFDGALNVDLTEFQTNLVPYPRIHFPLATFSPVISAEKAYHEQLSVAEITNMCFEPHNQMVKCDPRHGKYMAVCLLFRGDVVPKDVNAAIATIKTKRSIQFVDWCPTGFKVGINYQPPTVVPGGDLAKVPRAVCMLSNTTAIAEAWARLDHKFDLMYAKRAFVHWYVGEGMEEGEFSEAREDLAALEKDYEEVGVDSLEDNGEEGDEY.

Glutamine 11 contributes to the GTP binding site. An N6-acetyllysine modification is found at lysine 40. GTP-binding residues include glutamate 71, serine 140, glycine 144, threonine 145, threonine 179, asparagine 206, and asparagine 228. Glutamate 71 lines the Mg(2+) pocket. Glutamate 254 is an active-site residue.

The protein belongs to the tubulin family. As to quaternary structure, dimer of alpha and beta chains. A typical microtubule is a hollow water-filled tube with an outer diameter of 25 nm and an inner diameter of 15 nM. Alpha-beta heterodimers associate head-to-tail to form protofilaments running lengthwise along the microtubule wall with the beta-tubulin subunit facing the microtubule plus end conferring a structural polarity. Microtubules usually have 13 protofilaments but different protofilament numbers can be found in some organisms and specialized cells. Mg(2+) is required as a cofactor. In terms of processing, undergoes a tyrosination/detyrosination cycle, the cyclic removal and re-addition of a C-terminal tyrosine residue by the enzymes tubulin tyrosine carboxypeptidase (TTCP) and tubulin tyrosine ligase (TTL), respectively. Post-translationally, acetylation of alpha chains at Lys-40 stabilizes microtubules and affects affinity and processivity of microtubule motors. This modification has a role in multiple cellular functions, ranging from cell motility, cell cycle progression or cell differentiation to intracellular trafficking and signaling.

It localises to the cytoplasm. It is found in the cytoskeleton. The catalysed reaction is GTP + H2O = GDP + phosphate + H(+). Functionally, tubulin is the major constituent of microtubules, a cylinder consisting of laterally associated linear protofilaments composed of alpha- and beta-tubulin heterodimers. Microtubules grow by the addition of GTP-tubulin dimers to the microtubule end, where a stabilizing cap forms. Below the cap, tubulin dimers are in GDP-bound state, owing to GTPase activity of alpha-tubulin. The polypeptide is Tubulin alpha chain (Haemonchus contortus (Barber pole worm)).